We begin with the raw amino-acid sequence, 839 residues long: Elongation factor 2 (839 aa).

Residues 17 to 248 form the tr-type G domain; sequence ENIRNMSVIA…MGRLWGDSYF (232 aa). Residues 26 to 33, 156 to 159, and 211 to 213 each bind GTP; these read AHVDHGKT, NKVD, and SGL. Residue His698 is modified to Diphthamide.

This sequence belongs to the TRAFAC class translation factor GTPase superfamily. Classic translation factor GTPase family. EF-G/EF-2 subfamily. Post-translationally, phosphorylation by EF-2 kinase completely inactivates EF-2.

The protein resides in the cytoplasm. It carries out the reaction GTP + H2O = GDP + phosphate + H(+). Functionally, catalyzes the GTP-dependent ribosomal translocation step during translation elongation. During this step, the ribosome changes from the pre-translocational (PRE) to the post-translocational (POST) state as the newly formed A-site-bound peptidyl-tRNA and P-site-bound deacylated tRNA move to the P and E sites, respectively. Catalyzes the coordinated movement of the two tRNA molecules, the mRNA and conformational changes in the ribosome. The polypeptide is Elongation factor 2 (efbA) (Dictyostelium discoideum (Social amoeba)).